The chain runs to 65 residues: Large ribosomal subunit protein bL35 (65 aa).

Residues 1–22 form a disordered region; that stretch reads MPKIKTVRGAAKRFKKTGKGGF. The span at 10-22 shows a compositional bias: basic residues; it reads AAKRFKKTGKGGF.

The protein belongs to the bacterial ribosomal protein bL35 family.

The sequence is that of Large ribosomal subunit protein bL35 from Klebsiella pneumoniae (strain 342).